A 553-amino-acid chain; its full sequence is Solute carrier family 45 member 3 (553 aa).

11 helical membrane-spanning segments follow: residues 19–39, 52–72, 88–108, 120–140, 161–181, 198–218, 275–295, 323–343, 353–373, 382–402, and 522–542; these read LLVN…ITYV, FMTM…PLLG, FIWA…RAGW, LELA…QVCF, FSVY…LPAI, CLFG…LFVT, FVAE…YTDF, MGSL…LVMD, SVYL…CLSH, AALT…LASL, and AYMV…TQVV.

It belongs to the glycoside-pentoside-hexuronide (GPH) cation symporter transporter (TC 2.A.2) family. As to expression, expressed in the epididymis. Primarily expressed in the prostate, but also in other tissues.

It is found in the membrane. The enzyme catalyses sucrose(out) + H(+)(out) = sucrose(in) + H(+)(in). Its function is as follows. Proton-associated sucrose transporter. May be able to transport also glucose and fructose. This is Solute carrier family 45 member 3 (Slc45a3) from Mus musculus (Mouse).